The chain runs to 118 residues: Large ribosomal subunit protein uL18 (118 aa).

The protein belongs to the universal ribosomal protein uL18 family. As to quaternary structure, part of the 50S ribosomal subunit; part of the 5S rRNA/L5/L18/L25 subcomplex. Contacts the 5S and 23S rRNAs.

This is one of the proteins that bind and probably mediate the attachment of the 5S RNA into the large ribosomal subunit, where it forms part of the central protuberance. The protein is Large ribosomal subunit protein uL18 of Phenylobacterium zucineum (strain HLK1).